The following is a 522-amino-acid chain: Perilipin-1 (522 aa).

S81 is subject to Phosphoserine. The residue at position 85 (T85) is a Phosphothreonine. Phosphoserine occurs at positions 126, 130, 132, 137, and 174. Disordered stretches follow at residues 195–217 and 287–318; these read DKEESAPAPGHQQAQKSPKAKPS and LAAAQEEDHEDQTDTEGEDTEEEEELETEENK. Residues 291–314 show a composition bias toward acidic residues; the sequence is QEEDHEDQTDTEGEDTEEEEELET. The segment at 291–319 is required for interaction with CIDEC; it reads QEEDHEDQTDTEGEDTEEEEELETEENKF. Phosphothreonine is present on residues T299 and T301. S382, S384, and S408 each carry phosphoserine. The tract at residues 413-522 is disordered; it reads ESEFRDIDNP…THYSQLRKKS (110 aa). A compositionally biased stretch (basic and acidic residues) spans 414 to 435; that stretch reads SEFRDIDNPPAEVERREAERRA. Residues S436, S497, and S499 each carry the phosphoserine modification.

The protein belongs to the perilipin family. As to quaternary structure, interacts with ABHD5. Interacts with CIDEC. Interacts with AQP7. Major cAMP-dependent protein kinase-substrate in adipocytes, also dephosphorylated by PP1. When phosphorylated, may be maximally sensitive to HSL and when unphosphorylated, may play a role in the inhibition of lipolysis, by acting as a barrier in lipid droplet. In terms of tissue distribution, detected in adipocytes from white adipose tissue (at protein level). Detected in visceral adipose tissue and mammary gland.

The protein resides in the endoplasmic reticulum. The protein localises to the lipid droplet. Modulator of adipocyte lipid metabolism. Coats lipid storage droplets to protect them from breakdown by hormone-sensitive lipase (HSL). Its absence may result in leanness. Plays a role in unilocular lipid droplet formation by activating CIDEC. Their interaction promotes lipid droplet enlargement and directional net neutral lipid transfer. May modulate lipolysis and triglyceride levels. The sequence is that of Perilipin-1 (PLIN1) from Homo sapiens (Human).